The primary structure comprises 320 residues: Olfactory receptor 2T12 (320 aa).

Residues 1–23 (MEMRNTTPDFILLGLFNHTRAHQ) lie on the Extracellular side of the membrane. Asn-17 carries N-linked (GlcNAc...) asparagine glycosylation. The helical transmembrane segment at 24-47 (VLFMMLLATVLTSLFSNALMILLI) threads the bilayer. Residues 48-55 (HWDHRLHR) are Cytoplasmic-facing. The helical transmembrane segment at 56 to 77 (PMYFLLSQLSLMDMMLVSTTVP) threads the bilayer. The Extracellular segment spans residues 78–98 (KMAADYLTGNKAISRAGCGVQ). A disulfide bridge connects residues Cys-95 and Cys-187. A helical membrane pass occupies residues 99 to 118 (IFFLPTLGGGECFLLAAMAY). Residues 119–137 (DRYAAVCHPLRYPTLMSWQ) are Cytoplasmic-facing. The chain crosses the membrane as a helical span at residues 138-156 (LCLRMTMSSWLLGAADGLL). Residues 157 to 193 (QAVATLSFPYCGAHEIDHFFCEAPVLVRLACADTSVF) lie on the Extracellular side of the membrane. The helical transmembrane segment at 194–217 (ENAMYICCVLMLLVPFSLILSSYG) threads the bilayer. Topologically, residues 218–234 (LILAAVLLMRSTEARKK) are cytoplasmic. The helical transmembrane segment at 235–257 (AFATCSSHVAVVGLFYGAGIFTY) threads the bilayer. The Extracellular portion of the chain corresponds to 258–270 (MRPKSHRSTNHDK). Residues 271–290 (VVSAFYTMFTPLLNPLIYSV) traverse the membrane as a helical segment. Residues 291 to 320 (RNSEVKEALKRWLGTCVNLKHQQNEAHRSR) lie on the Cytoplasmic side of the membrane.

This sequence belongs to the G-protein coupled receptor 1 family.

The protein resides in the cell membrane. In terms of biological role, odorant receptor. This Homo sapiens (Human) protein is Olfactory receptor 2T12 (OR2T12).